A 455-amino-acid chain; its full sequence is MGLSVIILAAGQGKRMASSTPKILHPLGGIPLLERVVNTARLLNPHTIHVVYGNGGSHVREKLNYLPVHWIEQSQPLGTGHAVLQAIPFCQNEDRVLILYGDVPLISPKTLNSLLENTPSNGLGVVVAELPDPTGLGRIIRDDFGNILSIVEHKDAEEHQLKIREINTGIMTTTAMNLKKWLPQLNNNNCQKEYYLTDTVALAVAEGCPVGGVAAQCCEEVQGVNDRWELTKLERYYQRLMAKKLSLAGVTIIDPERFDARGENIEIAPDVVIDVNVILEGNVQLDRNVRIGPNVILKNTTVGENTEIHANSVIEAAVIKANCSVGPFARLRPGSVLEEGAKVGNFVEMKKTTLGRGSKANHLTYLGDTIIGKNVNVGAGTITCNYDGANKWQTKIEDGAFIGSNVALVAPLTVGKNATIGAGSTLSQDAPPDQLTVARERQRTIKGWHRPTKKE.

A pyrophosphorylase region spans residues 1 to 227 (MGLSVIILAA…CEEVQGVNDR (227 aa)). Residues 8–11 (LAAG), Lys-22, Gln-73, 78–79 (GT), 100–102 (YGD), Gly-137, Glu-152, Asn-167, and Asn-225 each bind UDP-N-acetyl-alpha-D-glucosamine. Mg(2+) is bound at residue Asp-102. A Mg(2+)-binding site is contributed by Asn-225. Residues 228 to 248 (WELTKLERYYQRLMAKKLSLA) form a linker region. Residues 249 to 455 (GVTIIDPERF…KGWHRPTKKE (207 aa)) are N-acetyltransferase. Arg-332 and Lys-350 together coordinate UDP-N-acetyl-alpha-D-glucosamine. The active-site Proton acceptor is His-362. Residues Tyr-365 and Asn-376 each contribute to the UDP-N-acetyl-alpha-D-glucosamine site. Acetyl-CoA is bound by residues Ala-379, 385 to 386 (NY), Ser-404, Ala-422, and Arg-439.

In the N-terminal section; belongs to the N-acetylglucosamine-1-phosphate uridyltransferase family. The protein in the C-terminal section; belongs to the transferase hexapeptide repeat family. As to quaternary structure, homotrimer. Requires Mg(2+) as cofactor.

It localises to the cytoplasm. It carries out the reaction alpha-D-glucosamine 1-phosphate + acetyl-CoA = N-acetyl-alpha-D-glucosamine 1-phosphate + CoA + H(+). The enzyme catalyses N-acetyl-alpha-D-glucosamine 1-phosphate + UTP + H(+) = UDP-N-acetyl-alpha-D-glucosamine + diphosphate. It functions in the pathway nucleotide-sugar biosynthesis; UDP-N-acetyl-alpha-D-glucosamine biosynthesis; N-acetyl-alpha-D-glucosamine 1-phosphate from alpha-D-glucosamine 6-phosphate (route II): step 2/2. It participates in nucleotide-sugar biosynthesis; UDP-N-acetyl-alpha-D-glucosamine biosynthesis; UDP-N-acetyl-alpha-D-glucosamine from N-acetyl-alpha-D-glucosamine 1-phosphate: step 1/1. Its pathway is bacterial outer membrane biogenesis; LPS lipid A biosynthesis. In terms of biological role, catalyzes the last two sequential reactions in the de novo biosynthetic pathway for UDP-N-acetylglucosamine (UDP-GlcNAc). The C-terminal domain catalyzes the transfer of acetyl group from acetyl coenzyme A to glucosamine-1-phosphate (GlcN-1-P) to produce N-acetylglucosamine-1-phosphate (GlcNAc-1-P), which is converted into UDP-GlcNAc by the transfer of uridine 5-monophosphate (from uridine 5-triphosphate), a reaction catalyzed by the N-terminal domain. The chain is Bifunctional protein GlmU from Coxiella burnetii (strain RSA 493 / Nine Mile phase I).